Consider the following 495-residue polypeptide: MTARAIMIQGTGSDVGKSLLVAGFCRLAARRGLSVAPFKPQNMSNNAAATADGGEIGRAQALQARACGLDPQTDFNPVLLKPQSDCTAQVIVHGRPTATLEAADYMARRDTLRGAVLESFARLTARFDLVIVEGAGSPAEINLRDRDIANMGFARAAGVPVVLAGDIDRGGVIAALVGTKTVIDPADAAMIRAFLINKFRGDPALFEPAMADIERMTGWAGLGIVPWLSAAARLPAEDGVALEQMRPTGGGRIRIAAPMLSRIANFDDADPLRAEPSVDFFFVPPGQAIPRDVDVILLFGTKSTLGDMAFLRAQGWDHDILAHARTGGRILGICGGYQMLGQWLCDPEGVDGAAGELPGLGLLKTDTTMQGEKTVRPVTGQCARTGLPVSGYEIHAGLTRGPDAARPFLHLPEGPDGAISPDGRVEGTYVHGLFAQDAFRAAWLENVRAGASSDAAYGASVEAALDELADGLEAHLDVDRFFALAAAPGWRGAPS.

The 188-residue stretch at 252 to 439 folds into the GATase cobBQ-type domain; that stretch reads RIRIAAPMLS…VHGLFAQDAF (188 aa). The active-site Nucleophile is the Cys334. Residue His431 is part of the active site.

This sequence belongs to the CobB/CobQ family. CobQ subfamily.

The protein operates within cofactor biosynthesis; adenosylcobalamin biosynthesis. In terms of biological role, catalyzes amidations at positions B, D, E, and G on adenosylcobyrinic A,C-diamide. NH(2) groups are provided by glutamine, and one molecule of ATP is hydrogenolyzed for each amidation. This Hyphomonas neptunium (strain ATCC 15444) protein is Cobyric acid synthase.